The primary structure comprises 349 residues: ATPase GET3 (349 aa).

An ATP-binding site is contributed by 26–33 (KGGVGKTT). Residue D57 is part of the active site. ATP is bound by residues E242 and N269. Positions 281 and 284 each coordinate Zn(2+).

This sequence belongs to the arsA ATPase family. As to quaternary structure, homodimer. Component of the Golgi to ER traffic (GET) complex, which is composed of GET1, GET2 and GET3. Within the complex, GET1 and GET2 form a heterotetramer which is stabilized by phosphatidylinositol binding and which binds to the GET3 homodimer. Interacts with the chloride channel protein GEF1.

The protein resides in the cytoplasm. Its subcellular location is the endoplasmic reticulum. The protein localises to the golgi apparatus. Functionally, ATPase required for the post-translational delivery of tail-anchored (TA) proteins to the endoplasmic reticulum. Recognizes and selectively binds the transmembrane domain of TA proteins in the cytosol. This complex then targets to the endoplasmic reticulum by membrane-bound receptors GET1 and GET2, where the tail-anchored protein is released for insertion. This process is regulated by ATP binding and hydrolysis. ATP binding drives the homodimer towards the closed dimer state, facilitating recognition of newly synthesized TA membrane proteins. ATP hydrolysis is required for insertion. Subsequently, the homodimer reverts towards the open dimer state, lowering its affinity for the GET1-GET2 receptor, and returning it to the cytosol to initiate a new round of targeting. Cooperates with the HDEL receptor ERD2 to mediate the ATP-dependent retrieval of resident ER proteins that contain a C-terminal H-D-E-L retention signal from the Golgi to the ER. Involved in low-level resistance to the oxyanions arsenite and arsenate, and in heat tolerance. The protein is ATPase GET3 of Lodderomyces elongisporus (strain ATCC 11503 / CBS 2605 / JCM 1781 / NBRC 1676 / NRRL YB-4239) (Yeast).